The following is a 628-amino-acid chain: Chaperone protein HtpG (628 aa).

The segment at 1–337 is a; substrate-binding; sequence MSEKKYTFET…SADLPLNVSR (337 aa). A b region spans residues 338-554; the sequence is EILQHNKVID…DYGMSLHMQK (217 aa). The c stretch occupies residues 555-628; sequence MMEEAGQSFM…FVKLVNKYIR (74 aa).

The protein belongs to the heat shock protein 90 family. In terms of assembly, homodimer.

The protein resides in the cytoplasm. In terms of biological role, molecular chaperone. Has ATPase activity. The chain is Chaperone protein HtpG from Francisella tularensis subsp. tularensis (strain FSC 198).